The chain runs to 689 residues: Glycine--tRNA ligase beta subunit (689 aa).

Belongs to the class-II aminoacyl-tRNA synthetase family. In terms of assembly, tetramer of two alpha and two beta subunits.

The protein resides in the cytoplasm. It catalyses the reaction tRNA(Gly) + glycine + ATP = glycyl-tRNA(Gly) + AMP + diphosphate. In Yersinia enterocolitica serotype O:8 / biotype 1B (strain NCTC 13174 / 8081), this protein is Glycine--tRNA ligase beta subunit.